Consider the following 130-residue polypeptide: Methylglyoxal synthase (130 aa).

Positions 1-130 constitute an MGS-like domain; the sequence is MSKPRIALIA…DLARTMQDVC (130 aa). Substrate is bound by residues H11, K15, 37–40, and 57–58; these read TGTT and SG. The active-site Proton donor/acceptor is the D63. H90 contributes to the substrate binding site.

This sequence belongs to the methylglyoxal synthase family.

The enzyme catalyses dihydroxyacetone phosphate = methylglyoxal + phosphate. Its function is as follows. Catalyzes the formation of methylglyoxal from dihydroxyacetone phosphate. This chain is Methylglyoxal synthase, found in Burkholderia multivorans (strain ATCC 17616 / 249).